The sequence spans 271 residues: MLGLENKLKLYGFNNLTKTLSFNIYDVCYAKSEREQKDYIAYIDEQYNSERLTRILCDVTESIGAHVLNISKQDYDPQGASVTILVSEQTLAVKEIDASCNKGEIDILKTRDTVVGHLDKSHVTVHTYPEYHPDNSIATFRVDIDVATCGEVSPLNALNYLIGSFDSDIITIDYRVRGFTRDVDGKKLFIDHKITSIQDYIDENTLKRYDAMDINVYQSNIFHTKMLIKEIELQNYLFNRDVYEIKPKQRLEIENNLRREMIEIFSGTNIY.

The Schiff-base intermediate with substrate; via pyruvic acid role is filled by Ser121. Ser121 bears the Pyruvic acid (Ser); by autocatalysis mark. Catalysis depends on His126, which acts as the Proton acceptor; for processing activity. Cys149 functions as the Proton donor; for catalytic activity in the catalytic mechanism.

It belongs to the prokaryotic AdoMetDC family. Type 2 subfamily. As to quaternary structure, heterooctamer of four alpha and four beta chains arranged as a tetramer of alpha/beta heterodimers. The cofactor is pyruvate. In terms of processing, is synthesized initially as an inactive proenzyme. Formation of the active enzyme involves a self-maturation process in which the active site pyruvoyl group is generated from an internal serine residue via an autocatalytic post-translational modification. Two non-identical subunits are generated from the proenzyme in this reaction, and the pyruvate is formed at the N-terminus of the alpha chain, which is derived from the carboxyl end of the proenzyme. The post-translation cleavage follows an unusual pathway, termed non-hydrolytic serinolysis, in which the side chain hydroxyl group of the serine supplies its oxygen atom to form the C-terminus of the beta chain, while the remainder of the serine residue undergoes an oxidative deamination to produce ammonia and the pyruvoyl group blocking the N-terminus of the alpha chain.

The enzyme catalyses S-adenosyl-L-methionine + H(+) = S-adenosyl 3-(methylsulfanyl)propylamine + CO2. Its pathway is amine and polyamine biosynthesis; S-adenosylmethioninamine biosynthesis; S-adenosylmethioninamine from S-adenosyl-L-methionine: step 1/1. Functionally, catalyzes the decarboxylation of S-adenosylmethionine to S-adenosylmethioninamine (dcAdoMet), the propylamine donor required for the synthesis of the polyamines spermine and spermidine from the diamine putrescine. In Clostridium beijerinckii (strain ATCC 51743 / NCIMB 8052) (Clostridium acetobutylicum), this protein is S-adenosylmethionine decarboxylase proenzyme.